The primary structure comprises 292 residues: tRNA (guanine-N(7)-)-methyltransferase (292 aa).

The disordered stretch occupies residues 1–52 (MGKIEATSKEEKLRVQKEAEARRRAYRDLKKEARQMQKEVKFDTDDNSELPK). S-adenosyl-L-methionine is bound by residues Gly106, 129 to 130 (EI), 166 to 167 (NA), and Cys186. Residue Asp189 is part of the active site. 264–266 (TEE) contributes to the S-adenosyl-L-methionine binding site.

It belongs to the class I-like SAM-binding methyltransferase superfamily. TrmB family. Forms a complex with TRM82.

It localises to the nucleus. It catalyses the reaction guanosine(46) in tRNA + S-adenosyl-L-methionine = N(7)-methylguanosine(46) in tRNA + S-adenosyl-L-homocysteine. The protein operates within tRNA modification; N(7)-methylguanine-tRNA biosynthesis. Functionally, catalyzes the formation of N(7)-methylguanine at position 46 (m7G46) in tRNA. The polypeptide is tRNA (guanine-N(7)-)-methyltransferase (Debaryomyces hansenii (strain ATCC 36239 / CBS 767 / BCRC 21394 / JCM 1990 / NBRC 0083 / IGC 2968) (Yeast)).